Reading from the N-terminus, the 245-residue chain is Nisin immunity protein (245 aa).

The N-terminal stretch at 1–19 is a signal peptide; it reads MRRYLILIVALIGITGLSG. A lipid anchor (N-palmitoyl cysteine) is attached at C20. The S-diacylglycerol cysteine moiety is linked to residue C20.

The protein localises to the cell membrane. Functionally, involved in immunity against exogenously supplied nisin. This chain is Nisin immunity protein (nisI), found in Lactococcus lactis subsp. lactis (Streptococcus lactis).